The sequence spans 221 residues: Mediator of RNA polymerase II transcription subunit 19a (221 aa).

The segment at 101 to 221 (PVELPPAEKG…DEVGAIRVAG (121 aa)) is disordered. A compositionally biased stretch (basic residues) spans 142–152 (EHKKHKHKHKD). Over residues 153-178 (RSKDKDKDKDRDRKKDKNGHHDSGDH) the composition is skewed to basic and acidic residues. Over residues 179–188 (SKKHHDKKRK) the composition is skewed to basic residues.

Belongs to the plant Mediator complex subunit 19 family. As to quaternary structure, component of the Mediator complex. Interacts with FIB2.

Its subcellular location is the nucleus. Component of the Mediator complex, a coactivator involved in the regulated transcription of nearly all RNA polymerase II-dependent genes. Mediator functions as a bridge to convey information from gene-specific regulatory proteins to the basal RNA polymerase II transcription machinery. The Mediator complex, having a compact conformation in its free form, is recruited to promoters by direct interactions with regulatory proteins and serves for the assembly of a functional preinitiation complex with RNA polymerase II and the general transcription factors. The sequence is that of Mediator of RNA polymerase II transcription subunit 19a (MED19A) from Arabidopsis thaliana (Mouse-ear cress).